A 166-amino-acid chain; its full sequence is Ribonuclease P protein component (166 aa).

Belongs to the RnpA family. Consists of a catalytic RNA component (M1 or rnpB) and a protein subunit.

The catalysed reaction is Endonucleolytic cleavage of RNA, removing 5'-extranucleotides from tRNA precursor.. RNaseP catalyzes the removal of the 5'-leader sequence from pre-tRNA to produce the mature 5'-terminus. It can also cleave other RNA substrates such as 4.5S RNA. The protein component plays an auxiliary but essential role in vivo by binding to the 5'-leader sequence and broadening the substrate specificity of the ribozyme. The chain is Ribonuclease P protein component from Helicobacter pylori (strain HPAG1).